A 171-amino-acid polypeptide reads, in one-letter code: Putative phosphoesterase BPUM_1117 (171 aa).

The Proton donor role is filled by H34. 2 short sequence motifs (HXTX) span residues H34–L37 and H115–V118. H115 functions as the Proton acceptor in the catalytic mechanism.

It belongs to the 2H phosphoesterase superfamily. YjcG family.

In Bacillus pumilus (strain SAFR-032), this protein is Putative phosphoesterase BPUM_1117.